Here is a 72-residue protein sequence, read N- to C-terminus: Translational regulator CsrA (72 aa).

Belongs to the CsrA/RsmA family. In terms of assembly, homodimer; the beta-strands of each monomer intercalate to form a hydrophobic core, while the alpha-helices form wings that extend away from the core.

It localises to the cytoplasm. Functionally, a translational regulator that binds mRNA to regulate translation initiation and/or mRNA stability. Usually binds in the 5'-UTR at or near the Shine-Dalgarno sequence preventing ribosome-binding, thus repressing translation. Its main target seems to be the major flagellin gene, while its function is anatagonized by FliW. This chain is Translational regulator CsrA, found in Ruminiclostridium cellulolyticum (strain ATCC 35319 / DSM 5812 / JCM 6584 / H10) (Clostridium cellulolyticum).